The primary structure comprises 376 residues: MESNKDEAERCISIALKAIQSNQPERALRFLEKAQRLYPTPRVSALIESLNQKPQSTGDHPQPTDTTHTTTKKAGGTETPSANGEAGGGESAKGYTSEQVAAVKRVKQCKDYYEILGVSRSASDEDLKKAYRKLALKFHPDKNHAPGATEAFKAIGTAYAVLSNPEKRKQYDQFGDDKSQAARHGHSHGDFHRGFEADISPEDLFNMFFGGGFPSSNVHVYSNGRMRYTYQQRQDRRDNQGDGGLGVFVQLMPILILILVSALSQLMVSSPPYSLSPRPSVGHIHKRVTDHLNVAYYVADTFSEEYTGSSLKTVERNVEDDYIANLRNNCWKEKQQKEGLLYRARYFGDTDMYHRAQKMGTPSCNRLSEVQASLHG.

Met-1 carries the post-translational modification N-acetylmethionine. Positions 45 to 97 (ALIESLNQKPQSTGDHPQPTDTTHTTTKKAGGTETPSANGEAGGGESAKGYTS) are disordered. Low complexity predominate over residues 57 to 84 (TGDHPQPTDTTHTTTKKAGGTETPSANG). In terms of domain architecture, J spans 111–175 (DYYEILGVSR…EKRKQYDQFG (65 aa)). Position 186 is a pros-methylhistidine (His-186). A helical membrane pass occupies residues 243 to 263 (GGLGVFVQLMPILILILVSAL).

It belongs to the DnaJ family. DNAJB12/DNAJB14 subfamily. Homodimer and homotetramer. Interacts (via J domain) with HSPA8/Hsc70. Forms a multiprotein complex, at least composed of DNAJB12, DNAJB14, HSPA8/Hsc70 and SGTA; interaction with DNAJB14 and HSPA8/Hsc70 is direct. Methylated at His-186 by METTL9.

The protein resides in the endoplasmic reticulum membrane. The protein localises to the nucleus membrane. Its function is as follows. Acts as a co-chaperone with HSPA8/Hsc70; required to promote protein folding and trafficking, prevent aggregation of client proteins, and promote unfolded proteins to endoplasmic reticulum-associated degradation (ERAD) pathway. Acts by determining HSPA8/Hsc70's ATPase and polypeptide-binding activities. Can also act independently of HSPA8/Hsc70: together with DNAJB14, acts as a chaperone that promotes maturation of potassium channels KCND2 and KCNH2 by stabilizing nascent channel subunits and assembling them into tetramers. While stabilization of nascent channel proteins is dependent on HSPA8/Hsc70, the process of oligomerization of channel subunits is independent of HSPA8/Hsc70. When overexpressed, forms membranous structures together with DNAJB14 and HSPA8/Hsc70 within the nucleus; the role of these structures, named DJANGOs, is still unclear. The sequence is that of DnaJ homolog subfamily B member 12 from Mus musculus (Mouse).